Consider the following 441-residue polypeptide: MSKVTPQPKIGFVSLGCPKNLVDSERILTELRTEGYDVVPSYDDADMVIVNTCGFIDSAVQESLEAIGEALNENGKVIVTGCLGAKEDQIREVHPKVLEITGPHSYEQVLEHVHHYVPKPKHNPFLSLVPEQGVKLTPRHYAYLKISEGCNHRCTFCIIPSMRGDLVSRPIGEVLSEAKRLVDAGVKEILVISQDTSAYGVDVKHRTGFHNGEPVKTSMVSLCEQLSKLGIWTRLHYVYPYPHVDDVIPLMAEGKILPYLDIPLQHASPRILKLMKRPGSVDRQLARIKQWREICPELTLRSTFIVGFPSETEEDFQMLLDFLKEARLDRVGCFKYSPVEGADANALPDQVPEEVKEERWNRFMQLQQQISAERLQEKVGREILVIIDEVDEEGAIGRSMADAPEIDGAVYLNGETNVKPGDILRVKVEHADEYDLWGSRV.

An MTTase N-terminal domain is found at 8 to 118 (PKIGFVSLGC…VLEHVHHYVP (111 aa)). Residues Cys-17, Cys-53, Cys-82, Cys-150, Cys-154, and Cys-157 each coordinate [4Fe-4S] cluster. Residues 136-373 (LTPRHYAYLK…MQLQQQISAE (238 aa)) enclose the Radical SAM core domain. Residues 376–441 (QEKVGREILV…DEYDLWGSRV (66 aa)) form the TRAM domain.

This sequence belongs to the methylthiotransferase family. RimO subfamily. The cofactor is [4Fe-4S] cluster.

Its subcellular location is the cytoplasm. The enzyme catalyses L-aspartate(89)-[ribosomal protein uS12]-hydrogen + (sulfur carrier)-SH + AH2 + 2 S-adenosyl-L-methionine = 3-methylsulfanyl-L-aspartate(89)-[ribosomal protein uS12]-hydrogen + (sulfur carrier)-H + 5'-deoxyadenosine + L-methionine + A + S-adenosyl-L-homocysteine + 2 H(+). Its function is as follows. Catalyzes the methylthiolation of an aspartic acid residue of ribosomal protein uS12. This chain is Ribosomal protein uS12 methylthiotransferase RimO, found in Shigella sonnei (strain Ss046).